Here is a 508-residue protein sequence, read N- to C-terminus: MFS-type transporter penM (508 aa).

Residues 1-60 (MKDGEETPSVDGSTSASNREKLGTDLEIGPVDLSDGGKEEKVKDPNLVDWDGPDDPENPL) form a disordered region. The span at 35 to 46 (DGGKEEKVKDPN) shows a compositional bias: basic and acidic residues. N61 is a glycosylation site (N-linked (GlcNAc...) asparagine). The helical transmembrane segment at 73-93 (SIALITFLTPLGSSMFAPGVG) threads the bilayer. A glycan (N-linked (GlcNAc...) asparagine) is linked at N100. 6 helical membrane passes run 108–128 (SFVVSVYLLGYCFGPLIIAPL), 143–163 (ILYVIWTIACAFAPEIGSLVV), 166–186 (FFAGLAGSCPLTIGAGSIADM), 197–217 (AAWALGPLIGPVVGPVAGAYL), 225–245 (WSFYVLAMAAGAITISSLFSI), and 299–319 (PIVFLLSLYVGVIYGYLYLLF). The Peroxisomal targeting signal signature appears at 293-307 (KMLFRSPIVFLLSLY). An N-linked (GlcNAc...) asparagine glycan is attached at N331. Transmembrane regions (helical) follow at residues 335–355 (GAVGLTYLGLGVGSLIGLFLI), 379–399 (LPPMVPGAIFVPISLFMYGWT), 407–427 (IVPIIGTSFLGTGMMITFMCV), 435–457 (FTNYAASVMAANTVFRSLAGALL), and 475–495 (SLLGFIALAFCALPVIFWIYG).

The protein belongs to the major facilitator superfamily.

Its subcellular location is the peroxisome membrane. In terms of biological role, MFS-type transporter involved in penicillin production, most likely through the translocation of isopenicillin N from the cytosol to the peroxisomal lumen across the peroxisomal membrane. In Penicillium rubens (strain ATCC 28089 / DSM 1075 / NRRL 1951 / Wisconsin 54-1255) (Penicillium chrysogenum), this protein is MFS-type transporter penM.